The primary structure comprises 316 residues: Small ribosomal subunit protein mS26 (316 aa).

Residues 41-71 (TTRSARDSVSIPPDSPNYIKVPEPPQSSEVR) form a disordered region.

Belongs to the mitochondrion-specific ribosomal protein mS26 family. In terms of assembly, component of the mitochondrial small ribosomal subunit (mt-SSU). Mature N.crassa 74S mitochondrial ribosomes consist of a small (37S) and a large (54S) subunit. The 37S small subunit contains a 16S ribosomal RNA (16S mt-rRNA) and 32 different proteins. The 54S large subunit contains a 23S rRNA (23S mt-rRNA) and 42 different proteins.

The protein localises to the mitochondrion. Component of the mitochondrial ribosome (mitoribosome), a dedicated translation machinery responsible for the synthesis of mitochondrial genome-encoded proteins, including at least some of the essential transmembrane subunits of the mitochondrial respiratory chain. The mitoribosomes are attached to the mitochondrial inner membrane and translation products are cotranslationally integrated into the membrane. In Neurospora crassa (strain ATCC 24698 / 74-OR23-1A / CBS 708.71 / DSM 1257 / FGSC 987), this protein is Small ribosomal subunit protein mS26 (pet123).